Consider the following 480-residue polypeptide: Ribulose bisphosphate carboxylase large chain (480 aa).

A propeptide spanning residues 1-2 (MS) is cleaved from the precursor. An N-acetylproline modification is found at Pro-3. Lys-14 is subject to N6,N6,N6-trimethyllysine. Positions 123 and 173 each coordinate substrate. Residue Lys-175 is the Proton acceptor of the active site. Position 177 (Lys-177) interacts with substrate. 3 residues coordinate Mg(2+): Lys-201, Asp-203, and Glu-204. At Lys-201 the chain carries N6-carboxylysine. The Proton acceptor role is filled by His-294. Substrate is bound by residues Arg-295, His-327, and Ser-379.

It belongs to the RuBisCO large chain family. Type I subfamily. Heterohexadecamer of 8 large chains and 8 small chains; disulfide-linked. The disulfide link is formed within the large subunit homodimers. Mg(2+) is required as a cofactor. The disulfide bond which can form in the large chain dimeric partners within the hexadecamer appears to be associated with oxidative stress and protein turnover.

Its subcellular location is the plastid. It is found in the chloroplast. The catalysed reaction is 2 (2R)-3-phosphoglycerate + 2 H(+) = D-ribulose 1,5-bisphosphate + CO2 + H2O. The enzyme catalyses D-ribulose 1,5-bisphosphate + O2 = 2-phosphoglycolate + (2R)-3-phosphoglycerate + 2 H(+). In terms of biological role, ruBisCO catalyzes two reactions: the carboxylation of D-ribulose 1,5-bisphosphate, the primary event in carbon dioxide fixation, as well as the oxidative fragmentation of the pentose substrate in the photorespiration process. Both reactions occur simultaneously and in competition at the same active site. In Acorus calamus var. americanus (American sweet flag), this protein is Ribulose bisphosphate carboxylase large chain.